Here is a 127-residue protein sequence, read N- to C-terminus: Aspartate 1-decarboxylase (127 aa).

Serine 25 serves as the catalytic Schiff-base intermediate with substrate; via pyruvic acid. Serine 25 bears the Pyruvic acid (Ser) mark. Substrate is bound at residue threonine 57. Residue tyrosine 58 is the Proton donor of the active site. 73–75 (GAA) lines the substrate pocket.

Belongs to the PanD family. In terms of assembly, heterooctamer of four alpha and four beta subunits. Requires pyruvate as cofactor. In terms of processing, is synthesized initially as an inactive proenzyme, which is activated by self-cleavage at a specific serine bond to produce a beta-subunit with a hydroxyl group at its C-terminus and an alpha-subunit with a pyruvoyl group at its N-terminus.

Its subcellular location is the cytoplasm. It carries out the reaction L-aspartate + H(+) = beta-alanine + CO2. It participates in cofactor biosynthesis; (R)-pantothenate biosynthesis; beta-alanine from L-aspartate: step 1/1. Its function is as follows. Catalyzes the pyruvoyl-dependent decarboxylation of aspartate to produce beta-alanine. The sequence is that of Aspartate 1-decarboxylase from Halalkalibacterium halodurans (strain ATCC BAA-125 / DSM 18197 / FERM 7344 / JCM 9153 / C-125) (Bacillus halodurans).